The chain runs to 294 residues: tRNA dimethylallyltransferase (294 aa).

10 to 17 (GPTAVGKT) is an ATP binding site. Position 12 to 17 (12 to 17 (TAVGKT)) interacts with substrate. The segment at 35 to 38 (DSQQ) is interaction with substrate tRNA.

This sequence belongs to the IPP transferase family. Monomer. Mg(2+) serves as cofactor.

The catalysed reaction is adenosine(37) in tRNA + dimethylallyl diphosphate = N(6)-dimethylallyladenosine(37) in tRNA + diphosphate. In terms of biological role, catalyzes the transfer of a dimethylallyl group onto the adenine at position 37 in tRNAs that read codons beginning with uridine, leading to the formation of N6-(dimethylallyl)adenosine (i(6)A). The polypeptide is tRNA dimethylallyltransferase (Streptococcus pneumoniae (strain Hungary19A-6)).